The primary structure comprises 229 residues: Large ribosomal subunit protein uL1 (229 aa).

The protein belongs to the universal ribosomal protein uL1 family. In terms of assembly, part of the 50S ribosomal subunit.

In terms of biological role, binds directly to 23S rRNA. The L1 stalk is quite mobile in the ribosome, and is involved in E site tRNA release. Functionally, protein L1 is also a translational repressor protein, it controls the translation of the L11 operon by binding to its mRNA. The polypeptide is Large ribosomal subunit protein uL1 (Pelagibacter ubique (strain HTCC1062)).